We begin with the raw amino-acid sequence, 404 residues long: Probable tRNA sulfurtransferase (404 aa).

In terms of domain architecture, THUMP spans 60–165 (QPVVEALKLV…DEAAYISYEE (106 aa)). Residues 183-184 (ML), 208-209 (HF), R265, G287, and Q296 contribute to the ATP site.

Belongs to the ThiI family.

The protein localises to the cytoplasm. It catalyses the reaction [ThiI sulfur-carrier protein]-S-sulfanyl-L-cysteine + a uridine in tRNA + 2 reduced [2Fe-2S]-[ferredoxin] + ATP + H(+) = [ThiI sulfur-carrier protein]-L-cysteine + a 4-thiouridine in tRNA + 2 oxidized [2Fe-2S]-[ferredoxin] + AMP + diphosphate. The catalysed reaction is [ThiS sulfur-carrier protein]-C-terminal Gly-Gly-AMP + S-sulfanyl-L-cysteinyl-[cysteine desulfurase] + AH2 = [ThiS sulfur-carrier protein]-C-terminal-Gly-aminoethanethioate + L-cysteinyl-[cysteine desulfurase] + A + AMP + 2 H(+). It participates in cofactor biosynthesis; thiamine diphosphate biosynthesis. In terms of biological role, catalyzes the ATP-dependent transfer of a sulfur to tRNA to produce 4-thiouridine in position 8 of tRNAs, which functions as a near-UV photosensor. Also catalyzes the transfer of sulfur to the sulfur carrier protein ThiS, forming ThiS-thiocarboxylate. This is a step in the synthesis of thiazole, in the thiamine biosynthesis pathway. The sulfur is donated as persulfide by IscS. The sequence is that of Probable tRNA sulfurtransferase from Streptococcus pyogenes serotype M5 (strain Manfredo).